The chain runs to 235 residues: Orotidine 5'-phosphate decarboxylase (235 aa).

Residues Asp12, Lys34, 61–70, Thr116, Arg177, Gln186, and Arg207 each bind substrate; that span reads DMKLLDIDNT. Lys63 (proton donor) is an active-site residue.

Belongs to the OMP decarboxylase family. Type 1 subfamily. In terms of assembly, homodimer.

It carries out the reaction orotidine 5'-phosphate + H(+) = UMP + CO2. The protein operates within pyrimidine metabolism; UMP biosynthesis via de novo pathway; UMP from orotate: step 2/2. Functionally, catalyzes the decarboxylation of orotidine 5'-monophosphate (OMP) to uridine 5'-monophosphate (UMP). The sequence is that of Orotidine 5'-phosphate decarboxylase from Rhizobium etli (strain CIAT 652).